Here is a 215-residue protein sequence, read N- to C-terminus: Probable phosphoglycerate mutase GpmB (215 aa).

Substrate-binding positions include 8 to 15 (RHGETQWN), 21 to 22 (QG), R58, R60, 82 to 85 (ELDM), 104 to 105 (RR), and 151 to 152 (GI). H9 acts as the Tele-phosphohistidine intermediate in catalysis. The Proton donor/acceptor role is filled by E82.

It belongs to the phosphoglycerate mutase family. GpmB subfamily.

The enzyme catalyses (2R)-2-phosphoglycerate = (2R)-3-phosphoglycerate. Its pathway is carbohydrate degradation; glycolysis; pyruvate from D-glyceraldehyde 3-phosphate: step 3/5. The polypeptide is Probable phosphoglycerate mutase GpmB (Klebsiella pneumoniae (strain 342)).